The primary structure comprises 209 residues: Abscisic acid receptor PYL3 (209 aa).

Positions 1-23 are disordered; the sequence is MNLAPIHDPSSSSTTTTSSSTPY. Residues 10–21 show a composition bias toward low complexity; that stretch reads SSSSTTTTSSST. The segment at 43-205 is START-like; the sequence is FPRSPNTCTS…NLQNLAVIST (163 aa). Abscisate is bound by residues Lys-79, 113–118, 140–146, and Glu-170; these read ASTSVE and RLNNYRS. Positions 109-113 match the Gate loop motif; the sequence is SGLPA. Positions 139–141 match the Latch loop motif; that stretch reads HRL.

The protein belongs to the PYR/PYL/RCAR abscisic acid intracellular receptor family. In terms of assembly, homodimer and monomer. Binds ABA on one subunit only. ABA-binding favors monomer and trans-homodimer intermediate, and increases PP2C inhibitor activity. Binds both (-)-ABA and (+)-ABA. Binds to CARs protein in an ABA-independent manner, both at the plasma membrane and in the nucleus. Interacts with HAB1, ABI1 and ABI2, and possibly with other PP2Cs.

Its subcellular location is the cytoplasm. The protein localises to the nucleus. The protein resides in the cell membrane. Its function is as follows. Receptor for abscisic acid (ABA) required for ABA-mediated responses such as stomatal closure and germination inhibition. Inhibits the activity of group-A protein phosphatases type 2C (PP2Cs) when activated by ABA. Can be activated by both (-)-ABA and (+)-ABA. This Arabidopsis thaliana (Mouse-ear cress) protein is Abscisic acid receptor PYL3 (PYL3).